The sequence spans 466 residues: Eukaryotic translation initiation factor 3 subunit M (466 aa).

The tract at residues 40–62 (EISPLLEPLRQQEQSDAEPDRKQ) is disordered. The region spanning 211–378 (AQTHILQALQ…SEFLVHRATY (168 aa)) is the PCI domain. The disordered stretch occupies residues 424 to 466 (AAEEAAQGKSNDKGNKSGDRRQRHGNNQQSQQQQQPQEVAAAE). The span at 433 to 443 (SNDKGNKSGDR) shows a compositional bias: basic and acidic residues. Positions 451 to 460 (QQSQQQQQPQ) are enriched in low complexity.

This sequence belongs to the eIF-3 subunit M family. As to quaternary structure, component of the eukaryotic translation initiation factor 3 (eIF-3) complex.

Its subcellular location is the cytoplasm. Component of the eukaryotic translation initiation factor 3 (eIF-3) complex, which is involved in protein synthesis of a specialized repertoire of mRNAs and, together with other initiation factors, stimulates binding of mRNA and methionyl-tRNAi to the 40S ribosome. The eIF-3 complex specifically targets and initiates translation of a subset of mRNAs involved in cell proliferation. In Aspergillus oryzae (strain ATCC 42149 / RIB 40) (Yellow koji mold), this protein is Eukaryotic translation initiation factor 3 subunit M.